We begin with the raw amino-acid sequence, 131 residues long: MSAKTDEILDSLKSLSLLEASELVKQIEEAFGVSAAASAGVVMAAPGAAAGGDGADAAEEKTEFEVVLESFEASSKIKVLKEVRNATGLGLGEAKALVEAAPKTIKEGATKEDAEALKKAIEAVGGKVTLK.

The protein belongs to the bacterial ribosomal protein bL12 family. As to quaternary structure, homodimer. Part of the ribosomal stalk of the 50S ribosomal subunit. Forms a multimeric L10(L12)X complex, where L10 forms an elongated spine to which 2 to 4 L12 dimers bind in a sequential fashion. Binds GTP-bound translation factors.

Its function is as follows. Forms part of the ribosomal stalk which helps the ribosome interact with GTP-bound translation factors. Is thus essential for accurate translation. In Prochlorococcus marinus (strain NATL2A), this protein is Large ribosomal subunit protein bL12.